Consider the following 661-residue polypeptide: Cyclic di-GMP phosphodiesterase PdeR (661 aa).

One can recognise a PAS domain in the interval 109–179 (GLSFAEQVVS…RRNNRVFFRS (71 aa)). The region spanning 265-397 (NKVGVVYLDL…GRGQFCVFTP (133 aa)) is the GGDEF domain. The region spanning 406–658 (YLWLDTNLRK…AFERWYKRYL (253 aa)) is the EAL domain.

Interacts with DgcM and MlrA.

It catalyses the reaction 3',3'-c-di-GMP + H2O = 5'-phosphoguanylyl(3'-&gt;5')guanosine + H(+). Functionally, part of a signaling cascade that regulates curli biosynthesis. The cascade is composed of two cyclic-di-GMP (c-di-GMP) control modules, in which c-di-GMP controlled by the DgcE/PdeH pair (module I) regulates the activity of the DgcM/PdeR pair (module II), which in turn regulates activity of the transcription factor MlrA and expression of the master biofilm regulator csgD. PdeR acts as a trigger enzyme that connects modules I and II. It inhibits DgcM and MlrA by direct interaction. Inhibition is relieved when PdeR binds and degrades c-di-GMP generated by module I. The protein is Cyclic di-GMP phosphodiesterase PdeR of Escherichia coli (strain K12).